Here is a 323-residue protein sequence, read N- to C-terminus: CYFIP-related Rac1 interactor A (323 aa).

The protein belongs to the CYRI family. Interacts with RAC1 (GTP-bound form preferentially).

Its subcellular location is the membrane. Functionally, may negatively regulate RAC1 signaling and RAC1-driven cytoskeletal remodeling. May regulate chemotaxis, cell migration and epithelial polarization by controlling the polarity, plasticity, duration and extent of protrusions. This is CYFIP-related Rac1 interactor A (CYRIA) from Bos taurus (Bovine).